Consider the following 147-residue polypeptide: Mitochondrial import receptor subunit TOM20 homolog (147 aa).

At 1 to 3 (MVV) the chain is on the mitochondrial intermembrane side. The chain crosses the membrane as a helical span at residues 4 to 26 (VGKTSAIAAGVCGALFLGYCIYF). The Cytoplasmic segment spans residues 27–147 (DRKRRSDPNF…AQNLAEDDVE (121 aa)).

It belongs to the Tom20 family. In terms of assembly, forms part of the preprotein translocase complex of the outer mitochondrial membrane (TOM complex). Interacts with tom22.

It localises to the mitochondrion outer membrane. Central component of the receptor complex responsible for the recognition and translocation of cytosolically synthesized mitochondrial preproteins. Together with tom22 functions as the transit peptide receptor at the surface of the mitochondrion outer membrane and facilitates the movement of preproteins into the tom40 translocation pore. The sequence is that of Mitochondrial import receptor subunit TOM20 homolog (tomm20) from Xenopus tropicalis (Western clawed frog).